The primary structure comprises 95 residues: DNA-directed RNA polymerase subunit omega (95 aa).

Belongs to the RNA polymerase subunit omega family. The RNAP catalytic core consists of 2 alpha, 1 beta, 1 beta' and 1 omega subunit. When a sigma factor is associated with the core the holoenzyme is formed, which can initiate transcription.

It carries out the reaction RNA(n) + a ribonucleoside 5'-triphosphate = RNA(n+1) + diphosphate. Functionally, promotes RNA polymerase assembly. Latches the N- and C-terminal regions of the beta' subunit thereby facilitating its interaction with the beta and alpha subunits. This Colwellia psychrerythraea (strain 34H / ATCC BAA-681) (Vibrio psychroerythus) protein is DNA-directed RNA polymerase subunit omega.